The primary structure comprises 88 residues: Beta-insect excitatory toxin BmKIT1 (88 aa).

An N-terminal signal peptide occupies residues 1–18 (MKFFLIFLVIFPIMGVLG). The region spanning 20–83 (KNGYAVDSSG…IKDATKSYCD (64 aa)) is the LCN-type CS-alpha/beta domain. 4 disulfide bridges follow: Cys34–Cys55, Cys40–Cys60, Cys44–Cys62, and Cys56–Cys82. Ile87 carries the post-translational modification Isoleucine amide.

It belongs to the long (4 C-C) scorpion toxin superfamily. Sodium channel inhibitor family. Beta subfamily. Expressed by the venom gland.

It is found in the secreted. Functionally, excitatory insect beta-toxins induce a spastic paralysis. They bind voltage-independently at site-4 of sodium channels (Nav) and shift the voltage of activation toward more negative potentials thereby affecting sodium channel activation and promoting spontaneous and repetitive firing. This toxin is active only on insects. This is Beta-insect excitatory toxin BmKIT1 from Olivierus martensii (Manchurian scorpion).